We begin with the raw amino-acid sequence, 402 residues long: Flavohemoprotein (402 aa).

The Globin domain maps to 1 to 138; it reads MLSPEVRALV…LADLLIGRER (138 aa). Position 85 (H85) interacts with heme b. Active-site charge relay system residues include Y95 and E137. The segment at 149-402 is reductase; sequence GGWTGWRAFK…AEVFGTGGVA (254 aa). The region spanning 152-261 is the FAD-binding FR-type domain; that stretch reads TGWRAFKVVR…SPPQGDFTLD (110 aa). FAD is bound by residues Y190 and 206–209; that span reads RQYS. An NADP(+)-binding site is contributed by 274–279; sequence GVGLTP. 395 to 398 lines the FAD pocket; it reads VFGT.

The protein belongs to the globin family. Two-domain flavohemoproteins subfamily. In the C-terminal section; belongs to the flavoprotein pyridine nucleotide cytochrome reductase family. Requires heme b as cofactor. It depends on FAD as a cofactor.

The catalysed reaction is 2 nitric oxide + NADPH + 2 O2 = 2 nitrate + NADP(+) + H(+). The enzyme catalyses 2 nitric oxide + NADH + 2 O2 = 2 nitrate + NAD(+) + H(+). Its function is as follows. Is involved in NO detoxification in an aerobic process, termed nitric oxide dioxygenase (NOD) reaction that utilizes O(2) and NAD(P)H to convert NO to nitrate, which protects the bacterium from various noxious nitrogen compounds. Therefore, plays a central role in the inducible response to nitrosative stress. This Bordetella pertussis (strain Tohama I / ATCC BAA-589 / NCTC 13251) protein is Flavohemoprotein.